The sequence spans 1091 residues: Protein JSN1 (1091 aa).

Disordered stretches follow at residues 31 to 51 and 75 to 131; these read EYENNGESNSQLQQQPQKLGS and HHSK…GSLT. A compositionally biased stretch (polar residues) spans 99 to 111; it reads TVASKTPRASPSR. Serine 129 carries the phosphoserine modification. The residue at position 131 (threonine 131) is a Phosphothreonine. A phosphoserine mark is found at serine 160 and serine 168. The RRM domain maps to 340 to 426; sequence NTISISNVFP…APSKISFAKI (87 aa). Composition is skewed to low complexity over residues 482 to 494 and 507 to 520; these read QQSQQSQHQNHSS and NNNNSMHGNNNNSA. 2 disordered regions span residues 482-534 and 568-591; these read QQSQ…PPPN and HKGTSDTQNFGPLPEPLSGREFDP. Residues 557-913 enclose the PUM-HD domain; sequence QINSLIKKSL…RLLEEVGLAS (357 aa). The segment covering 568-577 has biased composition (polar residues); that stretch reads HKGTSDTQNF. 5 Pumilio repeats span residues 617–652, 653–689, 690–724, 725–760, and 801–837; these read AMLDELPELSSDYLGNTIVQKLFEHSSDIIKDIMLR, KTSKYLTSMGVHKNGTWACQKMITMAHTPRQIMQVTQ, GVKDYCTPLINDQFGNYVIQCVLKFGFPWNQFIFE, SIIANFWVIVQNRYGARAVRACLEAHDIVTPEQSIV, and RLTKRIVELCGHRLASLTILKVLNYRGDDNARKIILD. The segment at 911-981 is disordered; that stretch reads LASPSSTHNK…GSSASTLSPG (71 aa). At serine 913 the chain carries Phosphoserine. 2 stretches are compositionally biased toward low complexity: residues 915 to 935 and 951 to 979; these read SSTHNKTKQQQQQHHNSSISH and SVSSVKSGGSKHTTMNTTTTNGSSASTLS.

This chain is Protein JSN1 (JSN1), found in Saccharomyces cerevisiae (strain ATCC 204508 / S288c) (Baker's yeast).